The primary structure comprises 620 residues: Palmitoyltransferase ZDHHC17 (620 aa).

The Cytoplasmic segment spans residues 1-292 (MADALVGYEK…LKMDKEFRQK (292 aa)). ANK repeat units follow at residues 77–106 (ENVT…IVDQ), 111–140 (LNST…DPSL), 144–173 (EGCS…DVDM), 177–207 (NGMT…SVNL), 212–241 (HKNT…NVDA), and 245–274 (KGET…AKGY). 2 helical membrane passes run 293–313 (VMLG…DLDI) and 314–334 (DSWL…QFLS). Topologically, residues 335–345 (KSFFDHSMHSA) are cytoplasmic. The chain crosses the membrane as a helical span at residues 346–366 (LPLGIYLATKFWMYITWFYWF). Residues 367 to 369 (WND) lie on the Lumenal side of the membrane. Residues 370 to 390 (LPFVTIHLPFLLNSLALFYNF) form a helical membrane-spanning segment. Over 391–469 (GKSWKSDPGI…NCVGSGNHRY (79 aa)) the chain is Cytoplasmic. The DHHC domain occupies 425–475 (IFCSTCLIRKPIRSKHCAVCNRCIAKFDHHCPWVGNCVGSGNHRYFMGYLF). The active-site S-palmitoyl cysteine intermediate is Cys455. Residues 470–490 (FMGYLFFLLCMICWMMYGCIC) form a helical membrane-spanning segment. Residues 491-504 (YWRIHCATSYTKDG) are Lumenal-facing. A helical transmembrane segment spans residues 505-524 (FWIYITQIATCSPWMFWMFL). The Cytoplasmic segment spans residues 525–620 (NSVFHFMWVA…QTSGSGYQLV (96 aa)).

It belongs to the DHHC palmitoyltransferase family. AKR/ZDHHC17 subfamily. Autopalmitoylated.

The protein localises to the golgi apparatus membrane. The protein resides in the cytoplasmic vesicle membrane. It localises to the presynaptic cell membrane. The enzyme catalyses L-cysteinyl-[protein] + hexadecanoyl-CoA = S-hexadecanoyl-L-cysteinyl-[protein] + CoA. It carries out the reaction L-cysteinyl-[protein] + tetradecanoyl-CoA = S-tetradecanoyl-L-cysteinyl-[protein] + CoA. It catalyses the reaction L-cysteinyl-[protein] + octadecanoyl-CoA = S-octadecanoyl-L-cysteinyl-[protein] + CoA. In terms of biological role, palmitoyltransferase that catalyzes the addition of palmitate onto various protein substrates and is involved in a variety of cellular processes. Has no stringent fatty acid selectivity and in addition to palmitate can also transfer onto target proteins myristate from tetradecanoyl-CoA and stearate from octadecanoyl-CoA. Plays a role in axonogenesis. This Danio rerio (Zebrafish) protein is Palmitoyltransferase ZDHHC17.